Consider the following 1378-residue polypeptide: Hybrid signal transduction histidine kinase H (1378 aa).

Residues 212-242 adopt a coiled-coil conformation; that stretch reads KEKFKKEELINDFKSRLETLENKIDQRVDER. Positions 243 to 314 constitute a PAS domain; sequence IETRFKYVLE…NNNNNNNNNN (72 aa). Residues 294-337 are disordered; that stretch reads YQQHNNNNNNNNNNNNNNNNNNNNNSNNKSPIINSPNTTSPTNT. The span at 298 to 337 shows a compositional bias: low complexity; the sequence is NNNNNNNNNNNNNNNNNNNNNSNNKSPIINSPNTTSPTNT. A Histidine kinase domain is found at 498 to 805; sequence TMSHEMRTPL…SFHFLVEVFF (308 aa). A Phosphohistidine; by autocatalysis modification is found at histidine 501. Low complexity predominate over residues 663–696; sequence NNSNNSNNNHNHNNNNNNNNHLNCSGSFNNNGFN. Disordered stretches follow at residues 663–717, 905–924, and 1103–1213; these read NNSN…DKHC, TNNNNSNNDNNNNNTTSTTT, and NNSN…HPNP. A compositionally biased stretch (basic residues) spans 697–714; the sequence is HGHHHHHHHHHHHHHHHD. Composition is skewed to low complexity over residues 1103 to 1119 and 1136 to 1187; these read NNSNNNINNNNNNSGSS and SPSL…NNNN. Polar residues predominate over residues 1188 to 1206; that stretch reads LNHYNSDSILSSDLSPQQH. Residues 1244–1364 form the Response regulatory domain; the sequence is KIMVAEDSLV…ILAVELKRAW (121 aa). Aspartate 1297 bears the 4-aspartylphosphate mark.

In terms of processing, activation probably requires transfer of a phosphate group between a histidine in the kinase core (transmitter) domain and an aspartate of the receiver domain.

It carries out the reaction ATP + protein L-histidine = ADP + protein N-phospho-L-histidine.. Functionally, acts as a receptor histidine kinase for a signal transduction pathway. This protein undergoes an ATP-dependent autophosphorylation at a conserved histidine residue in the kinase core, and a phosphoryl group is then transferred to a conserved aspartate residue in the receiver domain. The protein is Hybrid signal transduction histidine kinase H (dhkH) of Dictyostelium discoideum (Social amoeba).